A 566-amino-acid polypeptide reads, in one-letter code: DNA ligase B (566 aa).

Lys-125 serves as the catalytic N6-AMP-lysine intermediate.

It belongs to the NAD-dependent DNA ligase family. LigB subfamily.

It catalyses the reaction NAD(+) + (deoxyribonucleotide)n-3'-hydroxyl + 5'-phospho-(deoxyribonucleotide)m = (deoxyribonucleotide)n+m + AMP + beta-nicotinamide D-nucleotide.. Functionally, catalyzes the formation of phosphodiester linkages between 5'-phosphoryl and 3'-hydroxyl groups in double-stranded DNA using NAD as a coenzyme and as the energy source for the reaction. This Pseudomonas putida (strain ATCC 700007 / DSM 6899 / JCM 31910 / BCRC 17059 / LMG 24140 / F1) protein is DNA ligase B.